A 126-amino-acid chain; its full sequence is Aspartate 1-decarboxylase (126 aa).

S25 functions as the Schiff-base intermediate with substrate; via pyruvic acid in the catalytic mechanism. At S25 the chain carries Pyruvic acid (Ser). T57 contacts substrate. Y58 (proton donor) is an active-site residue. 73–75 (GGA) is a binding site for substrate.

This sequence belongs to the PanD family. As to quaternary structure, heterooctamer of four alpha and four beta subunits. The cofactor is pyruvate. In terms of processing, is synthesized initially as an inactive proenzyme, which is activated by self-cleavage at a specific serine bond to produce a beta-subunit with a hydroxyl group at its C-terminus and an alpha-subunit with a pyruvoyl group at its N-terminus.

The protein localises to the cytoplasm. The catalysed reaction is L-aspartate + H(+) = beta-alanine + CO2. Its pathway is cofactor biosynthesis; (R)-pantothenate biosynthesis; beta-alanine from L-aspartate: step 1/1. Its function is as follows. Catalyzes the pyruvoyl-dependent decarboxylation of aspartate to produce beta-alanine. The polypeptide is Aspartate 1-decarboxylase (Xylella fastidiosa (strain 9a5c)).